A 252-amino-acid chain; its full sequence is 5'-nucleotidase SurE (252 aa).

Residues D8, D9, S39, and N95 each contribute to the a divalent metal cation site.

It belongs to the SurE nucleotidase family. Requires a divalent metal cation as cofactor.

It is found in the cytoplasm. The enzyme catalyses a ribonucleoside 5'-phosphate + H2O = a ribonucleoside + phosphate. Its function is as follows. Nucleotidase that shows phosphatase activity on nucleoside 5'-monophosphates. The protein is 5'-nucleotidase SurE of Thermoanaerobacter sp. (strain X514).